The primary structure comprises 156 residues: Small ribosomal subunit protein uS7 (156 aa).

It belongs to the universal ribosomal protein uS7 family. Part of the 30S ribosomal subunit. Contacts proteins S9 and S11.

Functionally, one of the primary rRNA binding proteins, it binds directly to 16S rRNA where it nucleates assembly of the head domain of the 30S subunit. Is located at the subunit interface close to the decoding center, probably blocks exit of the E-site tRNA. The polypeptide is Small ribosomal subunit protein uS7 (Rhizobium meliloti (strain 1021) (Ensifer meliloti)).